The sequence spans 504 residues: Crh-like protein CRH12 (504 aa).

Residues Met-1 to Ser-18 form the signal peptide. In terms of domain architecture, GH16 spans Glu-19–Gly-270. Asn-34 carries an N-linked (GlcNAc...) asparagine glycan. Cys-43 and Cys-51 are disulfide-bonded. Glu-138 serves as the catalytic Nucleophile. Glu-143 serves as the catalytic Proton donor. A chitin-binding site is contributed by Glu-143. Asn-161 carries N-linked (GlcNAc...) asparagine glycosylation. 3 residues coordinate chitin: Lys-221, Trp-225, and Thr-234. Residues Lys-304–Leu-404 are disordered. Positions Val-316–Ile-329 are enriched in polar residues. The span at Trp-356–Ser-378 shows a compositional bias: acidic residues. 3 N-linked (GlcNAc...) asparagine glycosylation sites follow: Asn-407, Asn-416, and Asn-425. Gly-479 is lipidated: GPI-anchor amidated glycine. A propeptide spans Val-480–Leu-504 (removed in mature form).

It belongs to the glycosyl hydrolase 16 family. CRH1 subfamily. In terms of processing, the GPI-anchor is attached to the protein in the endoplasmic reticulum and serves to target the protein to the cell surface. There, the glucosamine-inositol phospholipid moiety is cleaved off and the GPI-modified mannoprotein is covalently attached via its lipidless GPI glycan remnant to the 1,6-beta-glucan of the outer cell wall layer.

It is found in the secreted. It localises to the cell wall. Its subcellular location is the membrane. The enzyme catalyses Random endo-hydrolysis of N-acetyl-beta-D-glucosaminide (1-&gt;4)-beta-linkages in chitin and chitodextrins.. Functionally, dual chitinase/transglycosylase that plays a role in cell wall architecture. Chitinase and transglycosylase activities are coupled. Required for the polysaccharide cross-linking at the septa and the cell wall. More specifically, transfers chitin to 1,6-beta-glucan in the cell wall. Plays an important role in fungal pathogenesis via its functions in cell wall assembly and regeneration, filamentation, and adherence to host cells. This Candida albicans (strain SC5314 / ATCC MYA-2876) (Yeast) protein is Crh-like protein CRH12 (CRH12).